A 328-amino-acid polypeptide reads, in one-letter code: GATA transcription factor 17 (328 aa).

Positions 1–68 (MSGHHEAKPY…EEYEGGEGVP (68 aa)) are disordered. Residues 14–29 (RGPAPADEEAAPAAAA) show a composition bias toward low complexity. 2 stretches are compositionally biased toward acidic residues: residues 30 to 39 (DEAEAEAEVE) and 47 to 63 (EQEYEEGEEGEEEEYEG). The Tify domain occupies 100 to 135 (PHVASNTLTLSFQGEVYVFESVSAERVQAVLLLLGG). The CCT domain occupies 161–203 (RMASLMRFREKRKERNFDKKIRYTVRKEVALRMQRNRGQFTSS). Residues 198–231 (GQFTSSKSKAEEATSVITSSEGSPNWGAVEGRPP) are disordered. The GATA-type zinc finger occupies 236–263 (CHHCGISAASTPMMRRGPDGPRTLCNAC).

Belongs to the type IV zinc-finger family. Class C subfamily.

The protein resides in the nucleus. Transcriptional activator that specifically binds 5'-GATA-3' or 5'-GAT-3' motifs within gene promoters. In Oryza sativa subsp. japonica (Rice), this protein is GATA transcription factor 17.